Consider the following 417-residue polypeptide: Serine/threonine-protein phosphatase 4 regulatory subunit 2 (417 aa).

3 stretches are compositionally biased toward polar residues: residues 140 to 149, 158 to 170, and 186 to 196; these read EKNNSNSLNR, NSPSYTERSNING, and APMTTNGLPES. Positions 140 to 417 are disordered; it reads EKNNSNSLNR…EVTDEPMEQD (278 aa). Ser159 is subject to Phosphoserine. The segment covering 197-213 has biased composition (basic and acidic residues); that stretch reads TDSKEANLQQNEEKNHS. Residues 214–226 show a composition bias toward low complexity; that stretch reads DSSTSESEVSSVS. Ser226 is subject to Phosphoserine. Basic and acidic residues predominate over residues 231-258; sequence KHPDEDAVEAEGHEVKRLRFDKEGEVRE. Residues 259 to 269 show a composition bias toward polar residues; that stretch reads TASQTTSSEIS. The span at 283 to 297 shows a compositional bias: basic and acidic residues; the sequence is QDKDKDSRCTRQHCT. The span at 298–311 shows a compositional bias: acidic residues; it reads EEDEEEDEEEEEES. The segment covering 318 to 327 has biased composition (basic and acidic residues); the sequence is MIPERKNQEK. The span at 338–350 shows a compositional bias: acidic residues; the sequence is ETSEENNQMEESD. Over residues 353-363 the composition is skewed to basic and acidic residues; sequence QAEKDLLHSEG. A compositionally biased stretch (low complexity) spans 366 to 375; that stretch reads NEGPVSSSSS. Residues 385 to 399 are compositionally biased toward polar residues; it reads GSNSSKTGEILSESS. Residues 400-417 show a composition bias toward acidic residues; it reads MENDDEATEVTDEPMEQD.

Belongs to the PPP4R2 family. Serine/threonine-protein phosphatase 4 (PP4) occurs in different assemblies of the catalytic and one or more regulatory subunits. Component of the PP4 complexes PPP4C-PPP4R2, PPP4C-PPP4R2-PPP4R3A and PPP4C-PPP4R2-PPP4R3B. The PPP4C-PPP4R2 complex appears to be a tetramer composed of 2 molecules of PPP4C and 2 molecules of PPP4R2. Interacts with DDX20/GEMIN3 and GEMIN4. Interacts with RPA2; this DNA damage-dependent interaction recruits PPP4C leading to RPA2 dephosphorylation. In terms of tissue distribution, widely expressed.

Its subcellular location is the cytoplasm. The protein localises to the cytoskeleton. It is found in the microtubule organizing center. The protein resides in the centrosome. It localises to the nucleus. Functionally, regulatory subunit of serine/threonine-protein phosphatase 4 (PP4). May regulate the activity of PPP4C at centrosomal microtubule organizing centers. Its interaction with the SMN complex leads to enhance the temporal localization of snRNPs, suggesting a role of PPP4C in maturation of spliceosomal snRNPs. The PPP4C-PPP4R2-PPP4R3A PP4 complex specifically dephosphorylates H2AX phosphorylated on 'Ser-140' (gamma-H2AX) generated during DNA replication and required for DNA double strand break repair. Mediates RPA2 dephosphorylation by recruiting PPP4C to RPA2 in a DNA damage-dependent manner. RPA2 dephosphorylation is required for the efficient RPA2-mediated recruitment of RAD51 to chromatin following double strand breaks, an essential step for DNA repair. This Homo sapiens (Human) protein is Serine/threonine-protein phosphatase 4 regulatory subunit 2 (PPP4R2).